The following is a 222-amino-acid chain: N-(5'-phosphoribosyl)anthranilate isomerase (222 aa).

The protein belongs to the TrpF family.

The enzyme catalyses N-(5-phospho-beta-D-ribosyl)anthranilate = 1-(2-carboxyphenylamino)-1-deoxy-D-ribulose 5-phosphate. It functions in the pathway amino-acid biosynthesis; L-tryptophan biosynthesis; L-tryptophan from chorismate: step 3/5. This chain is N-(5'-phosphoribosyl)anthranilate isomerase, found in Rhizobium leguminosarum bv. trifolii (strain WSM2304).